The sequence spans 421 residues: 3-alpha-mycarosylerythronolide B desosaminyl transferase (421 aa).

A signal peptide spans 1–23 (MRVVFSSMASKSHLFGLVPLAWA).

Belongs to the glycosyltransferase 28 family. As to quaternary structure, heterotetramer composed of EryCII and EryCIII.

It carries out the reaction 3-O-alpha-L-mycarosylerythronolide B + dTDP-alpha-D-desosamine = erythromycin D + dTDP + H(+). The protein operates within antibiotic biosynthesis; erythromycin biosynthesis. Its function is as follows. Catalyzes the conversion of alpha-L-mycarosylerythronolide B into erythromycin D in the erythromycin biosynthesis pathway. In Saccharopolyspora erythraea (strain ATCC 11635 / DSM 40517 / JCM 4748 / NBRC 13426 / NCIMB 8594 / NRRL 2338), this protein is 3-alpha-mycarosylerythronolide B desosaminyl transferase (eryCIII).